The chain runs to 429 residues: Adenosylmethionine-8-amino-7-oxononanoate aminotransferase (429 aa).

A substrate-binding site is contributed by W52. 112–113 (GS) contacts pyridoxal 5'-phosphate. Y144 serves as a coordination point for substrate. Position 245 (D245) interacts with pyridoxal 5'-phosphate. Positions 274 and 307 each coordinate substrate. K274 is modified (N6-(pyridoxal phosphate)lysine). 308-309 (PT) is a pyridoxal 5'-phosphate binding site. Residue R391 coordinates substrate.

It belongs to the class-III pyridoxal-phosphate-dependent aminotransferase family. BioA subfamily. Homodimer. It depends on pyridoxal 5'-phosphate as a cofactor.

It localises to the cytoplasm. It carries out the reaction (8S)-8-amino-7-oxononanoate + S-adenosyl-L-methionine = S-adenosyl-4-methylsulfanyl-2-oxobutanoate + (7R,8S)-7,8-diammoniononanoate. Its pathway is cofactor biosynthesis; biotin biosynthesis; 7,8-diaminononanoate from 8-amino-7-oxononanoate (SAM route): step 1/1. Catalyzes the transfer of the alpha-amino group from S-adenosyl-L-methionine (SAM) to 7-keto-8-aminopelargonic acid (KAPA) to form 7,8-diaminopelargonic acid (DAPA). It is the only aminotransferase known to utilize SAM as an amino donor. The polypeptide is Adenosylmethionine-8-amino-7-oxononanoate aminotransferase (Buchnera aphidicola subsp. Baizongia pistaciae (strain Bp)).